Consider the following 198-residue polypeptide: Transcription factor BHLH133 (198 aa).

Residues 114 to 127 (SAESSQSYYAKNRR) form a basic motif; degenerate region. Residues 114–163 (SAESSQSYYAKNRRQRINERLRILQELIPNGTKVDISTMLEEAIQYVKFL) enclose the bHLH domain. A helix-loop-helix motif region spans residues 128-163 (QRINERLRILQELIPNGTKVDISTMLEEAIQYVKFL).

The protein belongs to the bHLH protein family.

It localises to the nucleus. Transcription factor that acts as a regulator of iron homeostasis. May act as negative regulator of iron transportation from root to shoot. Does not seem to be involved in the suppression of the induction of iron deficiency responsive genes. This chain is Transcription factor BHLH133, found in Oryza sativa subsp. japonica (Rice).